A 215-amino-acid chain; its full sequence is Large ribosomal subunit protein uL3 (215 aa).

N5-methylglutamine is present on Q156.

Belongs to the universal ribosomal protein uL3 family. Part of the 50S ribosomal subunit. Forms a cluster with proteins L14 and L19. Methylated by PrmB.

Functionally, one of the primary rRNA binding proteins, it binds directly near the 3'-end of the 23S rRNA, where it nucleates assembly of the 50S subunit. This is Large ribosomal subunit protein uL3 from Xylella fastidiosa (strain M12).